The following is a 150-amino-acid chain: D-aminoacyl-tRNA deacylase (150 aa).

A Gly-cisPro motif, important for rejection of L-amino acids motif is present at residues 138 to 139 (GP).

This sequence belongs to the DTD family. Homodimer.

The protein localises to the cytoplasm. It carries out the reaction glycyl-tRNA(Ala) + H2O = tRNA(Ala) + glycine + H(+). It catalyses the reaction a D-aminoacyl-tRNA + H2O = a tRNA + a D-alpha-amino acid + H(+). In terms of biological role, an aminoacyl-tRNA editing enzyme that deacylates mischarged D-aminoacyl-tRNAs. Also deacylates mischarged glycyl-tRNA(Ala), protecting cells against glycine mischarging by AlaRS. Acts via tRNA-based rather than protein-based catalysis; rejects L-amino acids rather than detecting D-amino acids in the active site. By recycling D-aminoacyl-tRNA to D-amino acids and free tRNA molecules, this enzyme counteracts the toxicity associated with the formation of D-aminoacyl-tRNA entities in vivo and helps enforce protein L-homochirality. The chain is D-aminoacyl-tRNA deacylase from Thermosipho melanesiensis (strain DSM 12029 / CIP 104789 / BI429).